Here is a 780-residue protein sequence, read N- to C-terminus: Cullin-5 (780 aa).

A Phosphoserine modification is found at Ser34. Thr210 carries the post-translational modification Phosphothreonine. Residues 711 to 772 (RILRTQEAII…HKYIRRDEAD (62 aa)) enclose the Cullin neddylation domain. Lys724 participates in a covalent cross-link: Glycyl lysine isopeptide (Lys-Gly) (interchain with G-Cter in NEDD8).

The protein belongs to the cullin family. In terms of assembly, component of multiple cullin-5-RING E3 ubiquitin-protein ligase complexes (ECS complexes, also named CRL5 complexes) formed of CUL5, Elongin BC (ELOB and ELOC), RNF7/RBX2 and a variable SOCS box domain-containing protein as substrate-specific recognition component. CUL5-containing ECS complexes specifically contain RNF7/RBX2, and not RBX1, as catalytic subunit. Component of the ECS(ASB2) complex with the substrate recognition component ASB2. Component of the ECS(ASB6) complex with the substrate recognition component ASB6. Component of the ECS(ASB7) complex with the substrate recognition component ASB7. Component of the ECS(ASB9) complex with the substrate recognition component ASB9. Component of the ECS(ASB11) complex with the substrate recognition component ASB11. Component of the ECS(ASB12) complex with the substrate recognition component ASB12. Component of the ECS(LRRC41) complex with the substrate recognition component LRRC41. Component of the ECS(SOCS1) complex with the substrate recognition component SOCS1. Component of the ECS(SOCS2) complex with the substrate recognition component SOCS2. Component of the ECS(WSB1) complex with the substrate recognition subunit WSB1. Component of the ECS(SOCS3) complex with the substrate recognition component SOCS3. Component of the ECS(SOCS7) complex with the substrate recognition component SOCS7. Component of the ECS(SPSB1) complex with the substrate recognition component SPSB1. Component of the ECS(SPSB3) complex with the substrate recognition component SPSB3. Component of the ECS(SPSB2) complex with the substrate recognition component SPSB2. Component of the ECS(SPSB4) complex with the substrate recognition component SPSB4. Component of the ECS(RAB40) complex with the substrate recognition subunit RAB40A, RAB40B or RAB40C. Component of the ECS(KLHDC1) complex with the substrate recognition component KLHDC1. Component of the ECS(PCMTD1) complex with the substrate recognition subunit PCMTD1. May also form complexes containing RBX1 and ELOA or VHL; additional evidence is however required to confirm this result in vivo. Interacts (when neddylated) with ARIH2; leading to activate the E3 ligase activity of ARIH2. Interacts with ERCC6; the interaction is induced by DNA damaging agents or inhibitors of RNA polymerase II elongation. Interacts with ELOA (via the BC-box). Interacts (unneddylated form) with DCUN1D1, DCUN1D2, DCUN1D3, DCUN1D4 and DCUN1D5; these interactions promote the cullin neddylation. In terms of processing, neddylated; which enhances the ubiquitination activity of ECS complexes and prevents binding of the inhibitor CAND1. Deneddylated via its interaction with the COP9 signalosome (CSN).

The protein localises to the nucleus. It functions in the pathway protein modification; protein ubiquitination. In terms of biological role, core component of multiple cullin-5-RING E3 ubiquitin-protein ligase complexes (ECS complexes, also named CRL5 complexes), which mediate the ubiquitination and subsequent proteasomal degradation of target proteins. Acts a scaffold protein that contributes to catalysis through positioning of the substrate and the ubiquitin-conjugating enzyme. The functional specificity of the E3 ubiquitin-protein ligase complex depends on the variable SOCS box-containing substrate recognition component. Acts as a key regulator of neuron positioning during cortex development: component of various SOCS-containing ECS complexes, such as the ECS(SOCS7) complex, that regulate reelin signaling by mediating ubiquitination and degradation of DAB1. ECS(SOCS1) seems to direct ubiquitination of JAK2. The ECS(SOCS2) complex mediates the ubiquitination and subsequent proteasomal degradation of phosphorylated EPOR and GHR. The ECS(SPSB3) complex catalyzes ubiquitination of nuclear CGAS. ECS(KLHDC1) complex is part of the DesCEND (destruction via C-end degrons) pathway and mediates ubiquitination and degradation of truncated SELENOS selenoprotein produced by failed UGA/Sec decoding, which ends with a glycine. The ECS(ASB9) complex mediates ubiquitination and degradation of CKB. As part of some ECS complex, promotes 'Lys-11'-linked ubiquitination and degradation of BTRC. As part of a multisubunit ECS complex, polyubiquitinates monoubiquitinated POLR2A. As part of the ECS(RAB40C) complex, mediates ANKRD28 ubiquitination and degradation, thereby regulating protein phosphatase 6 (PP6) complex activity and focal adhesion assembly during cell migration. As part of the ECS(RAB40A) complex, mediates RHOU 'Lys-48'-linked ubiquitination and degradation, thus inhibiting focal adhesion disassembly during cell migration. As part of the ECS(RAB40B) complex, mediates LIMA1/EPLIN and RAP2 ubiquitination, thereby regulating actin cytoskeleton dynamics and stress fiber formation during cell migration. May form a cell surface vasopressin receptor. In Rattus norvegicus (Rat), this protein is Cullin-5.